We begin with the raw amino-acid sequence, 95 residues long: ISWPSYPGSEGIRSSNCQKKLNCGTKNIATKGVCKAFCLGRKRFWQKCGKNGSGSKGSKVCNAVLAHAVEKAGKGLIAVTDKAVAAIVKLAAGIA.

Intrachain disulfides connect Cys17–Cys38, Cys23–Cys34, and Cys48–Cys61.

This sequence belongs to the worm cytolysin family.

It localises to the secreted. Functionally, permeabilizes a variety of cells. Forms large pores which allows the release of large proteins almost as rapidly as small organic molecules and inorganic ions. At sublytic concentrations, the toxin also inhibits protein kinase C and endogenous voltage-gated cation selective (sodium, calcium) channels occurring in the nervous and cardiovascular systems. The chain is Cerebratulus toxin A-III from Cerebratulus lacteus (Milky ribbon worm).